We begin with the raw amino-acid sequence, 92 residues long: uncharacterized protein (92 aa).

Positions 1-10 are enriched in basic and acidic residues; that stretch reads MGLLKKKDST. Residues 1-21 form a disordered region; it reads MGLLKKKDSTSARSSTSPCAD. Positions 16–66 constitute a CHCH domain; that stretch reads TSPCADLRNAYHNCFNKWYSEKFVKGQWDKEECVAEWKKYRDCLSENLDGK. 2 consecutive short sequence motifs (cx9C motif) follow at residues 19 to 29 and 48 to 58; these read CADLRNAYHNC and CVAEWKKYRDC. 2 cysteine pairs are disulfide-bonded: Cys19/Cys58 and Cys29/Cys48.

The protein belongs to the TRIAP1/MDM35 family.

This is an uncharacterized protein from Arabidopsis thaliana (Mouse-ear cress).